The chain runs to 272 residues: Prohibitin 1 (272 aa).

The residue at position 2 (alanine 2) is an N-acetylalanine. At threonine 91 the chain carries Phosphothreonine. Lysine 128 and lysine 186 each carry N6-acetyllysine. Residues 177–211 (KEFTEAVEAKQVAQQEAERARFVVEKAEQQKKAAI) adopt a coiled-coil conformation. Lysine 202 bears the N6-acetyllysine; alternate mark. Residue lysine 202 is modified to N6-succinyllysine; alternate. Tyrosine 249 bears the Phosphotyrosine mark.

Belongs to the prohibitin family. In terms of assembly, interacts with PHB2. Interacts with STOML2. Interacts with CD86 (via cytoplasmic domain); the interactions increases after priming with CD40. As to quaternary structure, (Microbial infection) Interacts with human enterovirus 71/EV-71 capsid protein VP0, protein 3CD and protease 3C. Widely expressed in different tissues.

The protein resides in the mitochondrion inner membrane. It localises to the nucleus. Its subcellular location is the cell membrane. It is found in the cytoplasm. With respect to regulation, target of the anti-cancer drug Rocaglamide (Roc-A). Functionally, protein with pleiotropic attributes mediated in a cell-compartment- and tissue-specific manner, which include the plasma membrane-associated cell signaling functions, mitochondrial chaperone, and transcriptional co-regulator of transcription factors in the nucleus. Plays a role in adipose tissue and glucose homeostasis in a sex-specific manner. Contributes to pulmonary vascular remodeling by accelerating proliferation of pulmonary arterial smooth muscle cells. In terms of biological role, in the mitochondria, together with PHB2, forms large ring complexes (prohibitin complexes) in the inner mitochondrial membrane (IMM) and functions as a chaperone protein that stabilizes mitochondrial respiratory enzymes and maintains mitochondrial integrity in the IMM, which is required for mitochondrial morphogenesis, neuronal survival, and normal lifespan. The prohibitin complex, with DNAJC19, regulates cardiolipin remodeling and the protein turnover of OMA1 in a cardiolipin-binding manner. Regulates mitochondrial respiration activity playing a role in cellular aging. The prohibitin complex plays a role of mitophagy receptor involved in targeting mitochondria for autophagic degradation. Involved in mitochondrial-mediated antiviral innate immunity, activates RIG-I-mediated signal transduction and production of IFNB1 and pro-inflammatory cytokine IL6. In the nucleus, acts as a transcription coregulator, enhances promoter binding by TP53, a transcription factor it activates, but reduces the promoter binding by E2F1, a transcription factor it represses. Interacts with STAT3 to affect IL17 secretion in T-helper Th17 cells. Its function is as follows. In the plasma membrane, cooperates with CD86 to mediate CD86-signaling in B lymphocytes that regulates the level of IgG1 produced through the activation of distal signaling intermediates. Upon CD40 engagement, required to activate NF-kappa-B signaling pathway via phospholipase C and protein kinase C activation. Functionally, (Microbial infection) In neuronal cells, cell surface-expressed PHB1 is involved in human enterovirus 71/EV-71 entry into neuronal cells specifically, while membrane-bound mitochondrial PHB1 associates with the virus replication complex and facilitates viral replication. May serve as a receptor for EV71. This is Prohibitin 1 (Phb1) from Mus musculus (Mouse).